Reading from the N-terminus, the 243-residue chain is MWFLFLLLPLWAGCAEPGDSEWVHLPSKCEVCKYVALELKSSFDETSRTRELIDTRYGFLEDDKKKKKIKYTTSDIRLIEVTEGLCSRLLEYNLHKERTGSNRFAKGMSETFQTLHHLVHKGVKVVMDIPYELWNETSAEVADMKKQCDVMMENYEEVIEDWYRNHQDEDLSEFLCARHVLKGQDQSCLSEQGDSRKGDTGPSTGTKKQKKQGEKKNKSKKQNSGSKEEKKQMDQPMAAKEEL.

A signal peptide spans 1–15; it reads MWFLFLLLPLWAGCA. The Saposin B-type domain occupies 27–236; the sequence is SKCEVCKYVA…KEEKKQMDQP (210 aa). Disulfide bonds link Cys29–Cys188, Cys32–Cys176, and Cys86–Cys148. Residues 136-160 adopt a coiled-coil conformation; the sequence is ETSAEVADMKKQCDVMMENYEEVIE. A disordered region spans residues 186 to 243; it reads QSCLSEQGDSRKGDTGPSTGTKKQKKQGEKKNKSKKQNSGSKEEKKQMDQPMAAKEEL. Residues 226–243 show a composition bias toward basic and acidic residues; it reads SKEEKKQMDQPMAAKEEL.

Belongs to the canopy family.

The protein resides in the endoplasmic reticulum. Toll-like receptor (TLR)-specific co-chaperone for HSP90B1. Required for proper TLR folding and hence controls TLR exit from the endoplasmic reticulum. Consequently, required for immune responses. This Xenopus laevis (African clawed frog) protein is Protein canopy homolog 3 (cnpy3).